A 104-amino-acid chain; its full sequence is Cytochrome c-552 (104 aa).

The N-terminal stretch at 1 to 23 (MHLHLRGICLVLAVASSSSSALA) is a signal peptide. Positions 37, 40, 41, and 82 each coordinate heme c.

Belongs to the cytochrome c family. As to quaternary structure, monoheme monomer. Has the tendency to dimerize. Binds 1 heme c group covalently per subunit.

The protein localises to the periplasm. This Bradyrhizobium diazoefficiens (strain JCM 10833 / BCRC 13528 / IAM 13628 / NBRC 14792 / USDA 110) protein is Cytochrome c-552 (cycB).